We begin with the raw amino-acid sequence, 1643 residues long: MANVSSFQRKIAKIKIGIASPQSILEASNGEVKKPETLNHRTGKPEKDGLFCEKIFGPVKDYECACGKYKGKKYEGTVCERCGVKVESKEARRRKIGHIELATPISHIWYLKSSPSILSIILNIGVKDLENIIYYGSKRVIERAYLTLPGPENENLGYLPGEILYQREYEIYDEYLDLRVEPAVKIVSVKGMPVADIDGKVEIKSELTHTERELNWIIIRDDTGVERKYPVFEGSSIMVENGQEVEKGTPLADRFLFEEDYLTQKEYSLFLEYYPGSIEVERDIERDTPIVVITDIDKRFAKRIDKKIGDILLEDEARAYEEVMKVLNSKIKEERENVIDKELVSEIEFPEKKFEKGTKITQEVLNELQEFGVKDLVAKEEDGTEKIFQINRYEKFEYGYGAEAIQKLLTKIDLEVLKARLESELEKLDRKSQKSVKILRRLKLVKDFIKSGNQPEWLITNIIPVIPPDLRPLIQIDGGRFAATDLNDLYRKVINRNNRLRKLLEMEAPEIIVRNEKRILQQAVDSLFYNGRVGKPMTDRNRRPLRSLTDLLKGKKGRFRRNLLGKRVDYSGRAVIAVGPDLKIHECGLPKKMALELFKPFVLAELLRDSNVASKSARKFKKTIIEKEMPEAWEVLEEVIKGHPVLLNRAPTLHRVSIQAFIPKLIEGNAIRLHPLVCPPFNADFDGDQMAIHIPLSNIAQAESKFLMLSRYNIISPANGKPLSMPGKDIIAGAYYLTMHEDEKFKNLKVPTKVSELGKNGYVKHIFSEDLEATYAYEYLKIVDSDIYLQDGKLIWKKSDLPLHEPVAFRYKDGSILKTTIGKIIFNEEVPEDLRDYTQKMDKKNLKELIFNTFEKHGIDRTADLLDSIKDFGFHYATLSGLTISIRDVLVSPKREELIEESKGEVLRIESLYEEGYLTDNERYKEIIKIWESATAKVTEETAKTYRKYTFNPIWMMIESGARGNIDQLKQLAGMRGLMADPSGKIIEVPITSNFKNGLSELEFFTSTHGSRKGSADTALRTSTAGYLTRRLVDVAQSITITEEDCGTDKGIEARELWADDSKIENLSDFLFGRVLAKDVLDPETKEVIFNPQADKKYERGIILKEKDAQFLANYVKEIPVSKEKTIKIEDMPKDSYLESLEDVQVEGKVLIKKGEEITEEAIEEAFLHGIQKLDVKEYTAVDYVYSGEDLKVEIDGKTVTLLKYQERIDLKVSKVLEKHGIKTVTVRPSIFIRSPLTCESENGLCAKCYGMDLSNYKLVNRGEAVGIIAAQSIGEPGTQLTMRTFHTGGIATTSDITQGLPRAEELFEARKKTKGPEGEFSKTKGIVRAIERDTENKRGRRLKIIIENSDGELESYEADYRTKAVVEEGDKVLAGQRLTTGNIKPRNILKELGVGPLANYLLSEIKKIYAEQGVDIHDKHFEIIIRQMINKVEIIDGGDTDFMPGDLVSYGKVQKINEEILEENSYITENRELVVGKKLAKRVIIPAEDEEEEEDKIFEQGTEITEEILNQIIETNIKEIEVYEEYKEITTEEGKTHLVGTSKKYLINPKDTIKYERRLLRITKASLEREGWLSAASFQQTVQILTEAAIEGKVDRLKGLKENVIVGQPIPAGTGLKLYADQNYEVVQPEKEAEAAQEKSVG.

Cysteine 64, cysteine 66, cysteine 79, and cysteine 82 together coordinate Zn(2+). Mg(2+) is bound by residues aspartate 684, aspartate 686, and aspartate 688. 4 residues coordinate Zn(2+): cysteine 1046, cysteine 1239, cysteine 1246, and cysteine 1249.

The protein belongs to the RNA polymerase beta' chain family. In terms of assembly, the RNAP catalytic core consists of 2 alpha, 1 beta, 1 beta' and 1 omega subunit. When a sigma factor is associated with the core the holoenzyme is formed, which can initiate transcription. It depends on Mg(2+) as a cofactor. Zn(2+) serves as cofactor.

It catalyses the reaction RNA(n) + a ribonucleoside 5'-triphosphate = RNA(n+1) + diphosphate. Its function is as follows. DNA-dependent RNA polymerase catalyzes the transcription of DNA into RNA using the four ribonucleoside triphosphates as substrates. This chain is DNA-directed RNA polymerase subunit beta', found in Petrotoga mobilis (strain DSM 10674 / SJ95).